The chain runs to 965 residues: 26S proteasome regulatory subunit rpn2 (965 aa).

PC repeat units follow at residues 385–418, 424–457, 459–493, 494–528, 530–563, 564–599, 600–632, 634–668, 669–699, and 712–744; these read TATA…PSSS, GAFY…EIVQ, GLLL…VAGS, AAGI…EKII, GLGI…TLRY, AGMF…DVRR, AAVC…PHVR, GSAI…FVRQ, GAMI…FEQV, and GATL…SAIV. Disordered stretches follow at residues 826-883 and 934-965; these read AKRA…KSET and NRDA…DDDD. 2 stretches are compositionally biased toward basic and acidic residues: residues 827–856 and 874–883; these read KRAE…KEAT and SKKEEPKSET. A compositionally biased stretch (acidic residues) spans 945–965; sequence EPGEQEASPPEDFEYPFDDDD. S952 carries the post-translational modification Phosphoserine.

This sequence belongs to the proteasome subunit S1 family.

In terms of biological role, acts as a regulatory subunit of the 26S proteasome which is involved in the ATP-dependent degradation of ubiquitinated proteins. The chain is 26S proteasome regulatory subunit rpn2 (rpn2) from Schizosaccharomyces pombe (strain 972 / ATCC 24843) (Fission yeast).